An 829-amino-acid chain; its full sequence is ATP-dependent RNA helicase drs1 (829 aa).

2 disordered regions span residues 1–96 (MAPS…MDTE) and 145–295 (RRER…MSSF). Over residues 20–32 (DNEEDIPLEEEQE) the composition is skewed to acidic residues. Residues 48 to 59 (KQKKKNNKKSKK) are compositionally biased toward basic residues. A compositionally biased stretch (acidic residues) spans 63–78 (TEDDDDEAETKEDDAA). Residues 150 to 163 (AAKEGKTTATKEEE) show a composition bias toward basic and acidic residues. 4 stretches are compositionally biased toward acidic residues: residues 164–190 (DKME…DGVL), 218–228 (DGEDEDSEGED), 235–246 (DEDEGDASDDDS), and 258–271 (QSSD…EEEE). Basic and acidic residues predominate over residues 272 to 291 (AKMKEFFAPEEENQPKKKGE). The Q motif motif lies at 293 to 321 (SSFQEMSLSRPILRGLTSVGFTKPTPIQA). Residues 324 to 498 (IPISLMGKDV…RAGLNKPVRI (175 aa)) form the Helicase ATP-binding domain. Residue 337–344 (AVTGSGKT) coordinates ATP. A DEAD box motif is present at residues 446 to 449 (DEAD). In terms of domain architecture, Helicase C-terminal spans 528–707 (YLLHICKTIY…EKQLQNMEMQ (180 aa)). Residues 728–829 (TWFETQEDKK…KGGKGKGRRK (102 aa)) form a disordered region. Over residues 749–791 (GVRDKLKSKNEGKLSNKDRKKLDTMQERKQERTYKKGSAERAG) the composition is skewed to basic and acidic residues. Residues 800–815 (KVVKKVGRSAGPKKKG) show a composition bias toward basic residues.

Belongs to the DEAD box helicase family. DDX27/DRS1 subfamily. In terms of assembly, associates with pre-ribosomal particles.

It localises to the nucleus. Its subcellular location is the nucleolus. The enzyme catalyses ATP + H2O = ADP + phosphate + H(+). In terms of biological role, ATP-binding RNA helicase involved in ribosome assembly. The chain is ATP-dependent RNA helicase drs1 (drh-11) from Neurospora crassa (strain ATCC 24698 / 74-OR23-1A / CBS 708.71 / DSM 1257 / FGSC 987).